A 308-amino-acid chain; its full sequence is NADH-cytochrome b5 reductase 1 (308 aa).

The helical transmembrane segment at 29-49 threads the bilayer; the sequence is VASSPAFLVAAAAIVIAAAFY. Positions 64-167 constitute an FAD-binding FR-type domain; the sequence is SIWKEFPLQK…KGPKGNFKYT (104 aa). Residues 147-162 and 173-205 contribute to the FAD site; these read ASLKIGDTLRVKGPKG and HLGMIAGGTGLAPMIQIVRAILQNPPDRTNITL.

The protein belongs to the flavoprotein pyridine nucleotide cytochrome reductase family. In terms of assembly, monomer. Component of the 2-(3-amino-3-carboxypropyl)histidine synthase complex composed of DPH1, DPH2, DPH3 and a NADH-dependent reductase, predominantly MCR1.1. Requires FAD as cofactor.

It is found in the mitochondrion outer membrane. The catalysed reaction is 2 Fe(III)-[cytochrome b5] + NADH = 2 Fe(II)-[cytochrome b5] + NAD(+) + H(+). It catalyses the reaction 2 Fe(3+)-[Dph3] + NADH = 2 Fe(2+)-[Dph3] + NAD(+) + H(+). The protein operates within protein modification; peptidyl-diphthamide biosynthesis. NADH-dependent reductase for DPH3 and cytochrome b5. Required for the first step of diphthamide biosynthesis, a post-translational modification of histidine which occurs in elongation factor 2. DPH1 and DPH2 transfer a 3-amino-3-carboxypropyl (ACP) group from S-adenosyl-L-methionine (SAM) to a histidine residue, the reaction is assisted by a reduction system comprising DPH3 and a NADH-dependent reductase, predominantly MCR1.1. By reducing DPH3, also involved in the formation of the tRNA wobble base modification mcm5s 2U (5-methoxycarbonylmethyl-2-thiouridine), mediated by the elongator complex. The cytochrome b5/NADH cytochrome b5 reductase electron transfer system supports the catalytic activity of several sterol biosynthetic enzymes. This is NADH-cytochrome b5 reductase 1 (MCR1.1) from Laccaria bicolor (strain S238N-H82 / ATCC MYA-4686) (Bicoloured deceiver).